The chain runs to 139 residues: Putative pre-16S rRNA nuclease (139 aa).

The protein belongs to the YqgF nuclease family.

Its subcellular location is the cytoplasm. Could be a nuclease involved in processing of the 5'-end of pre-16S rRNA. This Legionella pneumophila (strain Paris) protein is Putative pre-16S rRNA nuclease.